Consider the following 259-residue polypeptide: Ubiquinone/menaquinone biosynthesis C-methyltransferase UbiE (259 aa).

S-adenosyl-L-methionine contacts are provided by residues Thr-82, Asp-103, 131–132 (NA), and Ser-148.

Belongs to the class I-like SAM-binding methyltransferase superfamily. MenG/UbiE family.

It carries out the reaction a 2-demethylmenaquinol + S-adenosyl-L-methionine = a menaquinol + S-adenosyl-L-homocysteine + H(+). It catalyses the reaction a 2-methoxy-6-(all-trans-polyprenyl)benzene-1,4-diol + S-adenosyl-L-methionine = a 5-methoxy-2-methyl-3-(all-trans-polyprenyl)benzene-1,4-diol + S-adenosyl-L-homocysteine + H(+). It functions in the pathway quinol/quinone metabolism; menaquinone biosynthesis; menaquinol from 1,4-dihydroxy-2-naphthoate: step 2/2. The protein operates within cofactor biosynthesis; ubiquinone biosynthesis. Its function is as follows. Methyltransferase required for the conversion of demethylmenaquinol (DMKH2) to menaquinol (MKH2) and the conversion of 2-polyprenyl-6-methoxy-1,4-benzoquinol (DDMQH2) to 2-polyprenyl-3-methyl-6-methoxy-1,4-benzoquinol (DMQH2). The protein is Ubiquinone/menaquinone biosynthesis C-methyltransferase UbiE of Haemophilus ducreyi (strain 35000HP / ATCC 700724).